The primary structure comprises 503 residues: UDP-N-acetylmuramate--L-alanine ligase (503 aa).

Residues 1–22 (MIKQTHVSNSSNNSTNSTAAQV) form a disordered region. A compositionally biased stretch (low complexity) spans 8–18 (SNSSNNSTNST). 135 to 141 (GTHGKTT) lines the ATP pocket.

It belongs to the MurCDEF family.

The protein localises to the cytoplasm. The enzyme catalyses UDP-N-acetyl-alpha-D-muramate + L-alanine + ATP = UDP-N-acetyl-alpha-D-muramoyl-L-alanine + ADP + phosphate + H(+). The protein operates within cell wall biogenesis; peptidoglycan biosynthesis. Cell wall formation. The sequence is that of UDP-N-acetylmuramate--L-alanine ligase from Colwellia psychrerythraea (strain 34H / ATCC BAA-681) (Vibrio psychroerythus).